The chain runs to 81 residues: Defensin-like protein 115 (81 aa).

The N-terminal stretch at 1 to 24 is a signal peptide; the sequence is MAITKKMLVVFLLAFLFVTSSVHC. 4 disulfide bridges follow: cysteine 40/cysteine 78, cysteine 46/cysteine 69, cysteine 54/cysteine 76, and cysteine 58/cysteine 77.

This sequence belongs to the DEFL family.

Its subcellular location is the secreted. The polypeptide is Defensin-like protein 115 (Arabidopsis thaliana (Mouse-ear cress)).